The primary structure comprises 368 residues: mRNA export factor (368 aa).

Residues 15 to 34 (TSMFGSTTTDNHNPMKDIEV) are disordered. WD repeat units follow at residues 37-79 (SPDD…QTIP), 84-114 (MHTGPVLDVCWSDDGSKVFTASCDKTAKMWD), 125-157 (QHDAPVKTVHWIKAPNYSCVMTGSWDKTLKFWD), 168-206 (QLPERCYCADVIYPMAVVATAERGLIVYQLENQPSEFRR), 215-255 (HRCV…KDNF), 271-301 (QDIYAVNGIAFHPVHGTLATVGSDGRFSFWD), and 310-346 (TSEQLDQPISACCFNHNGNIFAYASSYDWSKGHEFYN). The residue at position 229 (Thr229) is a Phosphothreonine.

Belongs to the WD repeat rae1 family. As to quaternary structure, interacts with NUMA1 (via N-terminal end of the coiled-coil domain); this interaction promotes spindle formation in mitosis. Interacts with NUP98. Interacts with MYCBP2. Interacts with USP11.

Its subcellular location is the cytoplasm. It is found in the nucleus. The protein localises to the cytoskeleton. It localises to the spindle pole. In terms of biological role, plays a role in mitotic bipolar spindle formation. Binds mRNA. May function in nucleocytoplasmic transport and in directly or indirectly attaching cytoplasmic mRNPs to the cytoskeleton. This Bos taurus (Bovine) protein is mRNA export factor (RAE1).